A 545-amino-acid polypeptide reads, in one-letter code: T-complex protein 1 subunit alpha (545 aa).

S2 is subject to N-acetylserine.

Belongs to the TCP-1 chaperonin family. As to quaternary structure, heterooligomeric complex of about 850 to 900 kDa that forms two stacked rings, 12 to 16 nm in diameter.

It localises to the cytoplasm. Molecular chaperone; assists the folding of proteins upon ATP hydrolysis. Known to play a role, in vitro, in the folding of actin and tubulin. The sequence is that of T-complex protein 1 subunit alpha from Arabidopsis thaliana (Mouse-ear cress).